The primary structure comprises 319 residues: MKTETPSVKIVAITADEAGQRIDNFLRTQLKGVPKSMIYRILRKGEVRVNKKRIKPEYKLEAGDEVRIPPVRVAEREEEAVSPHLQKVAALADVILYEDDHILVLNKPSGTAVHGGSGLSFGVIEGLRALRPEARFLELVHRLDRDTSGVLLVAKKRSALRSLHEQLREKGMQKDYLALVRGQWQSHVKSVQAPLLKNILQSGERIVRVSQEGKPSETRFKVEERYAFATLVRCSPVTGRTHQIRVHTQYAGHPIAFDDRYGDREFDRQLTEAGTGLNRLFLHAAALKFTHPGTGEVMRIEAPMDEGLKRCLQKLRNAR.

The S4 RNA-binding domain maps to 20-83 (QRIDNFLRTQ…AEREEEAVSP (64 aa)). Asp144 is an active-site residue.

It belongs to the pseudouridine synthase RluA family.

It carries out the reaction uridine(955/2504/2580) in 23S rRNA = pseudouridine(955/2504/2580) in 23S rRNA. Responsible for synthesis of pseudouridine from uracil at positions 955, 2504 and 2580 in 23S ribosomal RNA. This is Ribosomal large subunit pseudouridine synthase C from Escherichia coli (strain K12).